The chain runs to 113 residues: Nucleoid-associated protein Syncc9902_0023 (113 aa).

Belongs to the YbaB/EbfC family. In terms of assembly, homodimer.

Its subcellular location is the cytoplasm. It is found in the nucleoid. Binds to DNA and alters its conformation. May be involved in regulation of gene expression, nucleoid organization and DNA protection. In Synechococcus sp. (strain CC9902), this protein is Nucleoid-associated protein Syncc9902_0023.